A 302-amino-acid chain; its full sequence is Elongation factor Ts (302 aa).

An involved in Mg(2+) ion dislocation from EF-Tu region spans residues 80–83; it reads TDFV.

Belongs to the EF-Ts family.

The protein localises to the cytoplasm. Associates with the EF-Tu.GDP complex and induces the exchange of GDP to GTP. It remains bound to the aminoacyl-tRNA.EF-Tu.GTP complex up to the GTP hydrolysis stage on the ribosome. The chain is Elongation factor Ts from Gluconobacter oxydans (strain 621H) (Gluconobacter suboxydans).